The primary structure comprises 338 residues: UDP-glucose 4-epimerase (338 aa).

NAD(+)-binding positions include 11-12 (YI), 31-36 (DNLCNS), 58-59 (DI), 80-84 (FAGLK), Asn99, Ser124, Tyr149, Lys153, and Phe178. 2 residues coordinate substrate: Ser124 and Tyr149. The Proton acceptor role is filled by Tyr149. Substrate-binding positions include Asn179, 199–200 (NL), 216–218 (AIF), Arg231, 292–295 (REGD), and Tyr299.

This sequence belongs to the NAD(P)-dependent epimerase/dehydratase family. As to quaternary structure, homodimer. It depends on NAD(+) as a cofactor.

The enzyme catalyses UDP-alpha-D-glucose = UDP-alpha-D-galactose. The protein operates within carbohydrate metabolism; galactose metabolism. Its function is as follows. Involved in the metabolism of galactose. Catalyzes the conversion of UDP-galactose (UDP-Gal) to UDP-glucose (UDP-Glc) through a mechanism involving the transient reduction of NAD. The polypeptide is UDP-glucose 4-epimerase (galE) (Yersinia pestis).